The sequence spans 576 residues: Outer capsid protein VP4 (576 aa).

Its subcellular location is the virion. The chain is Outer capsid protein VP4 (Segment-4) from Banna virus (BAV).